Here is a 393-residue protein sequence, read N- to C-terminus: Arginine biosynthesis bifunctional protein ArgJ (393 aa).

Substrate is bound by residues threonine 145, lysine 171, threonine 182, glutamate 265, asparagine 388, and serine 393. Catalysis depends on threonine 182, which acts as the Nucleophile.

It belongs to the ArgJ family. Heterotetramer of two alpha and two beta chains.

It is found in the cytoplasm. It catalyses the reaction N(2)-acetyl-L-ornithine + L-glutamate = N-acetyl-L-glutamate + L-ornithine. The catalysed reaction is L-glutamate + acetyl-CoA = N-acetyl-L-glutamate + CoA + H(+). It functions in the pathway amino-acid biosynthesis; L-arginine biosynthesis; L-ornithine and N-acetyl-L-glutamate from L-glutamate and N(2)-acetyl-L-ornithine (cyclic): step 1/1. The protein operates within amino-acid biosynthesis; L-arginine biosynthesis; N(2)-acetyl-L-ornithine from L-glutamate: step 1/4. Functionally, catalyzes two activities which are involved in the cyclic version of arginine biosynthesis: the synthesis of N-acetylglutamate from glutamate and acetyl-CoA as the acetyl donor, and of ornithine by transacetylation between N(2)-acetylornithine and glutamate. The protein is Arginine biosynthesis bifunctional protein ArgJ of Nitratidesulfovibrio vulgaris (strain ATCC 29579 / DSM 644 / CCUG 34227 / NCIMB 8303 / VKM B-1760 / Hildenborough) (Desulfovibrio vulgaris).